Here is a 138-residue protein sequence, read N- to C-terminus: MLSPKRTKYRKYHRGRMRGAKTRGNEICFGNFGLQALEPTWITSRQIEAARRTITRYTKRGAKLWIRIFPDKTVTARAAESRMGSGKGAVDYWVAVVKPGTIIFEIGSVPEEIAKTALNLAAYKLPIKTKFIIKDNIS.

The protein belongs to the universal ribosomal protein uL16 family. As to quaternary structure, part of the 50S ribosomal subunit.

The protein resides in the plastid. It localises to the chloroplast. This Phaeodactylum tricornutum (strain CCAP 1055/1) protein is Large ribosomal subunit protein uL16c.